Consider the following 82-residue polypeptide: Penaeidin-3g (82 aa).

Residues Met1–Gly19 form the signal peptide. Position 20 is a pyrrolidone carboxylic acid (Gln20). 3 cysteine pairs are disulfide-bonded: Cys51–Cys66, Cys55–Cys73, and Cys67–Cys74. Ser81 is subject to Serine amide.

Belongs to the penaeidin family.

It localises to the cytoplasmic granule. Functionally, antibacterial and antifungal activity. Presents chitin-binding activity. This chain is Penaeidin-3g, found in Penaeus vannamei (Whiteleg shrimp).